Consider the following 274-residue polypeptide: Momilactone A synthase (274 aa).

The protein belongs to the short-chain dehydrogenases/reductases (SDR) family.

It catalyses the reaction 3beta-hydroxy-9beta-pimara-7,15-dien-19,6beta-olide + NAD(+) = momilactone A + NADH + H(+). The catalysed reaction is 3beta-hydroxy-9beta-pimara-7,15-dien-19,6beta-olide + NADP(+) = momilactone A + NADPH + H(+). In terms of biological role, involved in momilactone phytoalexins biosynthesis. Catalyzes the last step of momilactone A biosynthesis. In Oryza sativa subsp. japonica (Rice), this protein is Momilactone A synthase.